A 720-amino-acid polypeptide reads, in one-letter code: Polyribonucleotide nucleotidyltransferase (720 aa).

Mg(2+) contacts are provided by Asp-487 and Asp-493. The 60-residue stretch at 554-613 (PRITTISIPKEKIREVIGTGGKVIREICEQTGAKIDIDDDGTIKVASVDADAAQRAIDWI) folds into the KH domain. In terms of domain architecture, S1 motif spans 623–691 (GVIYNGKVVK…DRGKVKLSMK (69 aa)). Positions 695 to 720 (QTTGEDISAQLEAERAASKRERHHED) are disordered. Positions 706-720 (EAERAASKRERHHED) are enriched in basic and acidic residues.

The protein belongs to the polyribonucleotide nucleotidyltransferase family. Mg(2+) serves as cofactor.

It is found in the cytoplasm. The enzyme catalyses RNA(n+1) + phosphate = RNA(n) + a ribonucleoside 5'-diphosphate. In terms of biological role, involved in mRNA degradation. Catalyzes the phosphorolysis of single-stranded polyribonucleotides processively in the 3'- to 5'-direction. The polypeptide is Polyribonucleotide nucleotidyltransferase (Paramagnetospirillum magneticum (strain ATCC 700264 / AMB-1) (Magnetospirillum magneticum)).